A 340-amino-acid polypeptide reads, in one-letter code: COP9 signalosome complex subunit 5 (340 aa).

The MPN domain maps to valine 52–aspartate 189. Zn(2+) is bound by residues histidine 135, histidine 137, and aspartate 148. Positions histidine 135–aspartate 148 match the JAMM motif motif.

The protein belongs to the peptidase M67A family. CSN5 subfamily. Component of the COP9 signalosome (CSN) complex.

Its subcellular location is the cytoplasm. The protein resides in the nucleus. Its function is as follows. Catalytic Component of the COP9 signalosome (CSN) complex that acts as an regulator of the ubiquitin (Ubl) conjugation pathway by mediating the deneddylation of the cullin subunit of SCF-type E3 ubiquitin-protein ligase complexes. This chain is COP9 signalosome complex subunit 5 (RRI1), found in Gibberella zeae (strain ATCC MYA-4620 / CBS 123657 / FGSC 9075 / NRRL 31084 / PH-1) (Wheat head blight fungus).